A 300-amino-acid polypeptide reads, in one-letter code: Ribosomal RNA small subunit methyltransferase H (300 aa).

S-adenosyl-L-methionine contacts are provided by residues 33-35 (AGH), Asp52, Phe86, Asp97, and Gln104.

Belongs to the methyltransferase superfamily. RsmH family.

Its subcellular location is the cytoplasm. The catalysed reaction is cytidine(1402) in 16S rRNA + S-adenosyl-L-methionine = N(4)-methylcytidine(1402) in 16S rRNA + S-adenosyl-L-homocysteine + H(+). Its function is as follows. Specifically methylates the N4 position of cytidine in position 1402 (C1402) of 16S rRNA. The polypeptide is Ribosomal RNA small subunit methyltransferase H (Aliarcobacter butzleri (strain RM4018) (Arcobacter butzleri)).